An 84-amino-acid chain; its full sequence is Large ribosomal subunit protein bL31B (84 aa).

Belongs to the bacterial ribosomal protein bL31 family. Type B subfamily. In terms of assembly, part of the 50S ribosomal subunit.

Functionally, binds the 23S rRNA. In Rhodococcus jostii (strain RHA1), this protein is Large ribosomal subunit protein bL31B.